Consider the following 1043-residue polypeptide: Isoleucine--tRNA ligase (1043 aa).

Residues 49 to 59 (PFATGLPHYGH) carry the 'HIGH' region motif. The short motif at 592–596 (KMSKR) is the 'KMSKS' region element. Lys595 contributes to the ATP binding site.

It belongs to the class-I aminoacyl-tRNA synthetase family. IleS type 2 subfamily. As to quaternary structure, monomer. Requires Zn(2+) as cofactor.

Its subcellular location is the cytoplasm. The enzyme catalyses tRNA(Ile) + L-isoleucine + ATP = L-isoleucyl-tRNA(Ile) + AMP + diphosphate. Functionally, catalyzes the attachment of isoleucine to tRNA(Ile). As IleRS can inadvertently accommodate and process structurally similar amino acids such as valine, to avoid such errors it has two additional distinct tRNA(Ile)-dependent editing activities. One activity is designated as 'pretransfer' editing and involves the hydrolysis of activated Val-AMP. The other activity is designated 'posttransfer' editing and involves deacylation of mischarged Val-tRNA(Ile). This is Isoleucine--tRNA ligase from Chlamydia abortus (strain DSM 27085 / S26/3) (Chlamydophila abortus).